Consider the following 303-residue polypeptide: MSEVEKTYCGFIAIVGRPNVGKSTLLNELLGQKISITSRKPQTTRHRIMGIHTEGPYQAIYVDTPGLHIEEKRAINRLMNRAASSSLGDVELVIFVVEGTHWTADDEMVVNKLRSLQCPVLLAINKVDNVTDKTKLLPHMQFLSQQMNFLDVVPISAEKGMNVDTIASIVRKHMPEAEHHFPEDYITDRSQRFMASEIIREKLMRFLGEELPYSVTVEIEQFVPNERGGYNIHGLILVEREGQKKMVIGNKGSKIKVIGTEARQDMERMFEAKVHLELWVKVKSGWADDERALRSLGYTDDLK.

Residues 8–176 (YCGFIAIVGR…ASIVRKHMPE (169 aa)) form the Era-type G domain. A G1 region spans residues 16-23 (GRPNVGKS). Residue 16 to 23 (GRPNVGKS) participates in GTP binding. Positions 42 to 46 (QTTRH) are G2. Residues 63 to 66 (DTPG) form a G3 region. GTP-binding positions include 63–67 (DTPGL) and 125–128 (NKVD). The segment at 125-128 (NKVD) is G4. The G5 stretch occupies residues 155–157 (ISA). The KH type-2 domain maps to 207–284 (LGEELPYSVT…HLELWVKVKS (78 aa)).

It belongs to the TRAFAC class TrmE-Era-EngA-EngB-Septin-like GTPase superfamily. Era GTPase family. Monomer.

Its subcellular location is the cytoplasm. The protein localises to the cell inner membrane. Its function is as follows. An essential GTPase that binds both GDP and GTP, with rapid nucleotide exchange. Plays a role in 16S rRNA processing and 30S ribosomal subunit biogenesis and possibly also in cell cycle regulation and energy metabolism. The protein is GTPase Era of Yersinia pseudotuberculosis serotype O:1b (strain IP 31758).